Reading from the N-terminus, the 315-residue chain is Prephenate dehydratase (315 aa).

The Prephenate dehydratase domain maps to 7–190 (VVAYLGPAGT…ARTRFVAVQA (184 aa)). Residues 204-283 (SVIFSLPNVP…LVFVGSWPSN (80 aa)) form the ACT domain.

The catalysed reaction is prephenate + H(+) = 3-phenylpyruvate + CO2 + H2O. It functions in the pathway amino-acid biosynthesis; L-phenylalanine biosynthesis; phenylpyruvate from prephenate: step 1/1. The polypeptide is Prephenate dehydratase (pheA) (Corynebacterium glutamicum (strain ATCC 13032 / DSM 20300 / JCM 1318 / BCRC 11384 / CCUG 27702 / LMG 3730 / NBRC 12168 / NCIMB 10025 / NRRL B-2784 / 534)).